The sequence spans 376 residues: Probable plastid-lipid-associated protein 3, chloroplastic (376 aa).

A chloroplast-targeting transit peptide spans 1–53 (MATLFTVARPSSLLYVSSINPSKTFSPSISLKLNSLSFSFGYRPKPLRFSKIR). The segment at 54–146 (SSLPSESESE…EADAGNGSAV (93 aa)) is disordered. Positions 85–96 (PDSQPDNVTVNV) are enriched in polar residues. The span at 117–126 (MESDPPRNED) shows a compositional bias: basic and acidic residues.

This sequence belongs to the PAP/fibrillin family.

It localises to the plastid. Its subcellular location is the chloroplast. The protein resides in the plastoglobule. In terms of biological role, probably involved in light/cold stress-related jasmonate (JA) biosynthesis. The sequence is that of Probable plastid-lipid-associated protein 3, chloroplastic (PAP3) from Arabidopsis thaliana (Mouse-ear cress).